A 207-amino-acid polypeptide reads, in one-letter code: N-(5'-phosphoribosyl)anthranilate isomerase (207 aa).

The protein belongs to the TrpF family.

It catalyses the reaction N-(5-phospho-beta-D-ribosyl)anthranilate = 1-(2-carboxyphenylamino)-1-deoxy-D-ribulose 5-phosphate. It functions in the pathway amino-acid biosynthesis; L-tryptophan biosynthesis; L-tryptophan from chorismate: step 3/5. The chain is N-(5'-phosphoribosyl)anthranilate isomerase from Legionella pneumophila (strain Corby).